The sequence spans 56 residues: Large ribosomal subunit protein bL33 (56 aa).

This sequence belongs to the bacterial ribosomal protein bL33 family.

This Treponema pallidum (strain Nichols) protein is Large ribosomal subunit protein bL33 (rpmG).